The sequence spans 534 residues: CTP synthase (534 aa).

An amidoligase domain region spans residues 1 to 268; the sequence is MAAKYIFVTG…DQIVCDHLQL (268 aa). S14 provides a ligand contact to CTP. S14 lines the UTP pocket. 15-20 contributes to the ATP binding site; it reads SLGKGI. Y55 is a binding site for L-glutamine. D72 serves as a coordination point for ATP. D72 and E142 together coordinate Mg(2+). Residues 149-151, 189-194, and K225 each bind CTP; these read DIE and KSKPTQ. UTP contacts are provided by residues 189–194 and K225; that span reads KSKPTQ. One can recognise a Glutamine amidotransferase type-1 domain in the interval 293 to 534; sequence RIAIVGKYVE…FVRNALAAQA (242 aa). Position 355 (G355) interacts with L-glutamine. The active-site Nucleophile; for glutamine hydrolysis is C382. L-glutamine contacts are provided by residues 383–386, E406, and R463; that span reads LGMQ. Active-site residues include H508 and E510.

The protein belongs to the CTP synthase family. Homotetramer.

The enzyme catalyses UTP + L-glutamine + ATP + H2O = CTP + L-glutamate + ADP + phosphate + 2 H(+). It catalyses the reaction L-glutamine + H2O = L-glutamate + NH4(+). It carries out the reaction UTP + NH4(+) + ATP = CTP + ADP + phosphate + 2 H(+). It functions in the pathway pyrimidine metabolism; CTP biosynthesis via de novo pathway; CTP from UDP: step 2/2. Allosterically activated by GTP, when glutamine is the substrate; GTP has no effect on the reaction when ammonia is the substrate. The allosteric effector GTP functions by stabilizing the protein conformation that binds the tetrahedral intermediate(s) formed during glutamine hydrolysis. Inhibited by the product CTP, via allosteric rather than competitive inhibition. Its function is as follows. Catalyzes the ATP-dependent amination of UTP to CTP with either L-glutamine or ammonia as the source of nitrogen. Regulates intracellular CTP levels through interactions with the four ribonucleotide triphosphates. The polypeptide is CTP synthase (Shouchella clausii (strain KSM-K16) (Alkalihalobacillus clausii)).